We begin with the raw amino-acid sequence, 688 residues long: Polyphosphate kinase (688 aa).

N45 is a binding site for ATP. Positions 375 and 405 each coordinate Mg(2+). One can recognise a PLD phosphodiesterase domain in the interval 430–464 (PGLKIHAKLFLISRKENGEVVRYAHIGTGNFNEKT). Catalysis depends on H435, which acts as the Phosphohistidine intermediate. The ATP site is built by Y468, R564, and H592.

Belongs to the polyphosphate kinase 1 (PPK1) family. Requires Mg(2+) as cofactor. In terms of processing, an intermediate of this reaction is the autophosphorylated ppk in which a phosphate is covalently linked to a histidine residue through a N-P bond.

The enzyme catalyses [phosphate](n) + ATP = [phosphate](n+1) + ADP. In terms of biological role, catalyzes the reversible transfer of the terminal phosphate of ATP to form a long-chain polyphosphate (polyP). This chain is Polyphosphate kinase, found in Escherichia coli O6:H1 (strain CFT073 / ATCC 700928 / UPEC).